The sequence spans 525 residues: GMP synthase [glutamine-hydrolyzing] (525 aa).

The 199-residue stretch at 9-207 (RILILDFGSQ…VRDICQCEAL (199 aa)) folds into the Glutamine amidotransferase type-1 domain. The active-site Nucleophile is Cys86. Active-site residues include His181 and Glu183. Positions 208-400 (WTPAKIIDDA…LGLPYDMLYR (193 aa)) constitute a GMPS ATP-PPase domain. ATP is bound at residue 235-241 (SGGVDSS).

Homodimer.

It carries out the reaction XMP + L-glutamine + ATP + H2O = GMP + L-glutamate + AMP + diphosphate + 2 H(+). It participates in purine metabolism; GMP biosynthesis; GMP from XMP (L-Gln route): step 1/1. Functionally, catalyzes the synthesis of GMP from XMP. The protein is GMP synthase [glutamine-hydrolyzing] of Escherichia coli O17:K52:H18 (strain UMN026 / ExPEC).